We begin with the raw amino-acid sequence, 296 residues long: Nucleotide-binding protein ABC3036 (296 aa).

13–20 serves as a coordination point for ATP; the sequence is GMSGAGKS. 64–67 is a binding site for GTP; that stretch reads DLRG.

Belongs to the RapZ-like family.

Functionally, displays ATPase and GTPase activities. The chain is Nucleotide-binding protein ABC3036 from Shouchella clausii (strain KSM-K16) (Alkalihalobacillus clausii).